A 438-amino-acid chain; its full sequence is Aspartate--tRNA(Asp) ligase (438 aa).

An L-aspartate-binding site is contributed by Glu-170. Positions Gln-192–Lys-195 are aspartate. Position 214 (Arg-214) interacts with L-aspartate. Residues Arg-214–Glu-216, Arg-222–Leu-224, and Glu-361 contribute to the ATP site. The Mg(2+) site is built by Glu-361 and Ser-364. L-aspartate-binding residues include Ser-364 and Arg-368. Gly-409–Arg-412 contacts ATP.

The protein belongs to the class-II aminoacyl-tRNA synthetase family. Type 2 subfamily. Homodimer. Mg(2+) serves as cofactor.

The protein localises to the cytoplasm. It catalyses the reaction tRNA(Asp) + L-aspartate + ATP = L-aspartyl-tRNA(Asp) + AMP + diphosphate. In terms of biological role, catalyzes the attachment of L-aspartate to tRNA(Asp) in a two-step reaction: L-aspartate is first activated by ATP to form Asp-AMP and then transferred to the acceptor end of tRNA(Asp). Is specific for tRNA(Asp) since it aspartylates tRNA(Asn) 3 orders of magnitude less efficiently than tRNA(Asp). The sequence is that of Aspartate--tRNA(Asp) ligase from Thermococcus kodakarensis (strain ATCC BAA-918 / JCM 12380 / KOD1) (Pyrococcus kodakaraensis (strain KOD1)).